Reading from the N-terminus, the 265-residue chain is 4-hydroxy-2-oxo-heptane-1,7-dioate aldolase (265 aa).

The active-site Proton acceptor is the H45. Q147 is a substrate binding site. E149 serves as a coordination point for a divalent metal cation. Positions 174 and 175 each coordinate substrate. A divalent metal cation is bound at residue D175.

The protein belongs to the HpcH/HpaI aldolase family. Homohexamer; trimer of dimers. It depends on a divalent metal cation as a cofactor.

It catalyses the reaction 4-hydroxy-2-oxoheptanedioate = succinate semialdehyde + pyruvate. Its pathway is aromatic compound metabolism; 4-hydroxyphenylacetate degradation; pyruvate and succinate semialdehyde from 4-hydroxyphenylacetate: step 7/7. Its function is as follows. Catalyzes the reversible retro-aldol cleavage of 4-hydroxy-2-ketoheptane-1,7-dioate (HKHD) to pyruvate and succinic semialdehyde. In Klebsiella pneumoniae subsp. pneumoniae (strain ATCC 700721 / MGH 78578), this protein is 4-hydroxy-2-oxo-heptane-1,7-dioate aldolase.